The primary structure comprises 270 residues: Undecaprenyl-diphosphatase 1 (270 aa).

The next 7 membrane-spanning stretches (helical) occupy residues 5–25 (YYIL…PIPI), 42–62 (IEGF…VLLI), 89–109 (FFFI…GVLF), 117–137 (LKGV…LWII), 192–212 (FSFL…ITDI), 220–240 (TLFV…YISL), and 250–270 (GNLK…LIFL).

Belongs to the UppP family.

The protein localises to the cell membrane. It carries out the reaction di-trans,octa-cis-undecaprenyl diphosphate + H2O = di-trans,octa-cis-undecaprenyl phosphate + phosphate + H(+). Its function is as follows. Catalyzes the dephosphorylation of undecaprenyl diphosphate (UPP). Confers resistance to bacitracin. The protein is Undecaprenyl-diphosphatase 1 of Bacillus cereus (strain ATCC 10987 / NRS 248).